Here is a 563-residue protein sequence, read N- to C-terminus: Arginine--tRNA ligase (563 aa).

A 'HIGH' region motif is present at residues 121 to 131 (PNIAKPFSIGH).

This sequence belongs to the class-I aminoacyl-tRNA synthetase family. In terms of assembly, monomer.

Its subcellular location is the cytoplasm. The catalysed reaction is tRNA(Arg) + L-arginine + ATP = L-arginyl-tRNA(Arg) + AMP + diphosphate. The chain is Arginine--tRNA ligase from Streptococcus pyogenes serotype M49 (strain NZ131).